We begin with the raw amino-acid sequence, 308 residues long: Aspartate carbamoyltransferase catalytic subunit (308 aa).

Carbamoyl phosphate-binding residues include R50 and T51. K78 contributes to the L-aspartate binding site. Residues R100, H131, and Q134 each contribute to the carbamoyl phosphate site. Residues R164 and R216 each contribute to the L-aspartate site. The carbamoyl phosphate site is built by A259 and P260.

It belongs to the aspartate/ornithine carbamoyltransferase superfamily. ATCase family. In terms of assembly, heterododecamer (2C3:3R2) of six catalytic PyrB chains organized as two trimers (C3), and six regulatory PyrI chains organized as three dimers (R2).

It carries out the reaction carbamoyl phosphate + L-aspartate = N-carbamoyl-L-aspartate + phosphate + H(+). It functions in the pathway pyrimidine metabolism; UMP biosynthesis via de novo pathway; (S)-dihydroorotate from bicarbonate: step 2/3. Its function is as follows. Catalyzes the condensation of carbamoyl phosphate and aspartate to form carbamoyl aspartate and inorganic phosphate, the committed step in the de novo pyrimidine nucleotide biosynthesis pathway. This Oenococcus oeni (strain ATCC BAA-331 / PSU-1) protein is Aspartate carbamoyltransferase catalytic subunit.